We begin with the raw amino-acid sequence, 295 residues long: Cytidine deaminase (295 aa).

CMP/dCMP-type deaminase domains lie at 48–168 (TDNQ…FGPS) and 187–295 (EDDD…YLSL). Residue 89–91 (NME) participates in substrate binding. His-102 lines the Zn(2+) pocket. Residue Glu-104 is the Proton donor of the active site. Positions 129 and 132 each coordinate Zn(2+).

The protein belongs to the cytidine and deoxycytidylate deaminase family. In terms of assembly, homodimer. Zn(2+) serves as cofactor.

The catalysed reaction is cytidine + H2O + H(+) = uridine + NH4(+). It catalyses the reaction 2'-deoxycytidine + H2O + H(+) = 2'-deoxyuridine + NH4(+). This enzyme scavenges exogenous and endogenous cytidine and 2'-deoxycytidine for UMP synthesis. This chain is Cytidine deaminase, found in Vibrio vulnificus (strain CMCP6).